A 566-amino-acid polypeptide reads, in one-letter code: Nitrate/nitrite sensor protein NarQ (566 aa).

Residues 1-13 (MIVKRPVSASLAR) are Cytoplasmic-facing. The chain crosses the membrane as a helical span at residues 14-34 (AFFYIVLLSILSTGIALLTLA). Residues 35–146 (SSLRDAEAIN…LALQHYAERK (112 aa)) lie on the Periplasmic side of the membrane. A helical membrane pass occupies residues 147–167 (MLLVVAISLAGGIGIFTLVFF). Topologically, residues 168–566 (TLRRIRHQVV…SAEGEESQLM (399 aa)) are cytoplasmic. Residues 174–227 (HQVVAPLNQLVTASQRIEHGQFDSPPLDTNLPNELGLLAKTFNQMSSELHKLYR) enclose the HAMP domain. One can recognise a Histidine kinase domain in the interval 364 to 559 (TIARELHDSL…LVSISFRSAE (196 aa)). His370 carries the post-translational modification Phosphohistidine; by autocatalysis.

The protein resides in the cell inner membrane. It carries out the reaction ATP + protein L-histidine = ADP + protein N-phospho-L-histidine.. Its function is as follows. Acts as a sensor for nitrate/nitrite and transduces signal of nitrate/nitrite availability to the NarL/NarP proteins. NarQ probably activates NarL and NarP by phosphorylation. NarQ probably negatively regulates the NarL protein by dephosphorylation. This Escherichia coli (strain K12) protein is Nitrate/nitrite sensor protein NarQ (narQ).